The sequence spans 271 residues: Autophagy-related protein 5 (271 aa).

Lysine 145 participates in a covalent cross-link: Glycyl lysine isopeptide (Lys-Gly) (interchain with G-Cter in ATG12).

This sequence belongs to the ATG5 family. Conjugated with ATG12. Interacts with ATG10. The ATG5-ATG12 conjugate forms a complex with several units of ATG16. The ATG12-ATG5 conjugate also associates with ATG3. Post-translationally, conjugated to ATG12; which is essential for autophagy. Conjugation with ATG12 involves ATG7 as an E1-like activating enzyme and ATG10 as an E2-like conjugating enzyme.

It localises to the preautophagosomal structure membrane. Its function is as follows. Involved in cytoplasm to vacuole transport (Cvt) and autophagic vesicle formation. Autophagy is essential for maintenance of amino acid levels and protein synthesis under nitrogen starvation. Required for selective autophagic degradation of the nucleus (nucleophagy). Also required for mitophagy, which eliminates defective or superfluous mitochondria in order to fulfill cellular energy requirements and prevent excess ROS production. Conjugation with ATG12, through a ubiquitin-like conjugating system involving ATG7 as an E1-like activating enzyme and ATG10 as an E2-like conjugating enzyme, is essential for its function. The ATG12-ATG5 conjugate acts as an E3-like enzyme which is required for lipidation of ATG8 and ATG8 association to the vesicle membranes. ATG12-ATG5 rearranges the ATG3 catalytic center and enhances its E2 activity. In Kluyveromyces marxianus (strain DMKU3-1042 / BCC 29191 / NBRC 104275) (Yeast), this protein is Autophagy-related protein 5.